Reading from the N-terminus, the 88-residue chain is UPF0297 protein BcerKBAB4_4234 (88 aa).

The protein belongs to the UPF0297 family.

The protein is UPF0297 protein BcerKBAB4_4234 of Bacillus mycoides (strain KBAB4) (Bacillus weihenstephanensis).